The sequence spans 185 residues: Tumor necrosis factor receptor superfamily member 17 (185 aa).

The Extracellular portion of the chain corresponds to 1–49; that stretch reads MAQQCFHSEYFDSLLHACKPCHLRCSNPPATCQPYCDPSVTSSVKGTYT. Residues 4–36 form a TNFR-Cys repeat; that stretch reads QCFHSEYFDSLLHACKPCHLRCSNPPATCQPYC. 3 disulfide bridges follow: Cys5–Cys18, Cys21–Cys32, and Cys25–Cys36. The helical; Signal-anchor for type III membrane protein transmembrane segment at 50-70 threads the bilayer; that stretch reads VLWIFLGLTLVLSLALFTISF. The Cytoplasmic segment spans residues 71–185; it reads LLRKMNPEAL…MGMEKPTHTR (115 aa).

Associates with TRAF1, TRAF2, TRAF3, TRAF5 and TRAF6. Detected in spleen, thymus, bone marrow and heart, and at lower levels in kidney and lung.

It is found in the membrane. In terms of biological role, receptor for TNFSF13B/BLyS/BAFF and TNFSF13/APRIL. Promotes B-cell survival and plays a role in the regulation of humoral immunity. Activates NF-kappa-B and JNK. The polypeptide is Tumor necrosis factor receptor superfamily member 17 (Tnfrsf17) (Mus musculus (Mouse)).